The primary structure comprises 390 residues: Bifunctional enzyme IspD/IspF (390 aa).

Residues 1–229 (MAAGRGERAG…RQDHAVFPDI (229 aa)) form a 2-C-methyl-D-erythritol 4-phosphate cytidylyltransferase region. Residues 230 to 390 (RTGNGYDVHS…TVIYPGEVPE (161 aa)) form a 2-C-methyl-D-erythritol 2,4-cyclodiphosphate synthase region. Positions 236 and 238 each coordinate a divalent metal cation. Residues 236–238 (DVH) and 262–263 (HS) each bind 4-CDP-2-C-methyl-D-erythritol 2-phosphate. H270 contacts a divalent metal cation. Residues 284-286 (DIG), 360-363 (TTNE), F367, and R370 contribute to the 4-CDP-2-C-methyl-D-erythritol 2-phosphate site.

In the N-terminal section; belongs to the IspD/TarI cytidylyltransferase family. IspD subfamily. It in the C-terminal section; belongs to the IspF family. A divalent metal cation serves as cofactor.

The catalysed reaction is 2-C-methyl-D-erythritol 4-phosphate + CTP + H(+) = 4-CDP-2-C-methyl-D-erythritol + diphosphate. It carries out the reaction 4-CDP-2-C-methyl-D-erythritol 2-phosphate = 2-C-methyl-D-erythritol 2,4-cyclic diphosphate + CMP. It functions in the pathway isoprenoid biosynthesis; isopentenyl diphosphate biosynthesis via DXP pathway; isopentenyl diphosphate from 1-deoxy-D-xylulose 5-phosphate: step 2/6. It participates in isoprenoid biosynthesis; isopentenyl diphosphate biosynthesis via DXP pathway; isopentenyl diphosphate from 1-deoxy-D-xylulose 5-phosphate: step 4/6. Its function is as follows. Bifunctional enzyme that catalyzes the formation of 4-diphosphocytidyl-2-C-methyl-D-erythritol from CTP and 2-C-methyl-D-erythritol 4-phosphate (MEP) (IspD), and catalyzes the conversion of 4-diphosphocytidyl-2-C-methyl-D-erythritol 2-phosphate (CDP-ME2P) to 2-C-methyl-D-erythritol 2,4-cyclodiphosphate (ME-CPP) with a corresponding release of cytidine 5-monophosphate (CMP) (IspF). The protein is Bifunctional enzyme IspD/IspF of Brucella suis biovar 1 (strain 1330).